We begin with the raw amino-acid sequence, 603 residues long: Glutamyl-tRNA(Gln) amidotransferase subunit B, mitochondrial (603 aa).

A mitochondrion-targeting transit peptide spans 1 to 32; that stretch reads MIRHRLRLALSAAPVTATGRRTRSKTAPRRSL. Positions 12–59 are disordered; the sequence is AAPVTATGRRTRSKTAPRRSLSTQQTQSSASSSSNNLDGDGRAFVPLR. A compositionally biased stretch (low complexity) spans 31 to 48; sequence SLSTQQTQSSASSSSNNL.

The protein belongs to the GatB/GatE family. GatB subfamily. In terms of assembly, subunit of the heterotrimeric GatCAB amidotransferase (AdT) complex, composed of A, B and C subunits.

Its subcellular location is the mitochondrion. It catalyses the reaction L-glutamyl-tRNA(Gln) + L-glutamine + ATP + H2O = L-glutaminyl-tRNA(Gln) + L-glutamate + ADP + phosphate + H(+). Allows the formation of correctly charged Gln-tRNA(Gln) through the transamidation of misacylated Glu-tRNA(Gln) in the mitochondria. The reaction takes place in the presence of glutamine and ATP through an activated gamma-phospho-Glu-tRNA(Gln). This chain is Glutamyl-tRNA(Gln) amidotransferase subunit B, mitochondrial, found in Arthroderma otae (strain ATCC MYA-4605 / CBS 113480) (Microsporum canis).